We begin with the raw amino-acid sequence, 1377 residues long: DNA-directed RNA polymerase subunit beta' (1377 aa).

Residues cysteine 60, cysteine 62, cysteine 75, and cysteine 78 each contribute to the Zn(2+) site. Mg(2+)-binding residues include aspartate 449, aspartate 451, and aspartate 453. Positions 777, 851, 858, and 861 each coordinate Zn(2+).

Belongs to the RNA polymerase beta' chain family. In terms of assembly, the RNAP catalytic core consists of 2 alpha, 1 beta, 1 beta' and 1 omega subunit. When a sigma factor is associated with the core the holoenzyme is formed, which can initiate transcription. It depends on Mg(2+) as a cofactor. Zn(2+) serves as cofactor.

It catalyses the reaction RNA(n) + a ribonucleoside 5'-triphosphate = RNA(n+1) + diphosphate. DNA-dependent RNA polymerase catalyzes the transcription of DNA into RNA using the four ribonucleoside triphosphates as substrates. The sequence is that of DNA-directed RNA polymerase subunit beta' from Borreliella afzelii (strain PKo) (Borrelia afzelii).